Consider the following 390-residue polypeptide: 1-deoxy-D-xylulose 5-phosphate reductoisomerase (390 aa).

Residues T10, G11, S12, I13, G36, N38, and N124 each contribute to the NADPH site. K125 lines the 1-deoxy-D-xylulose 5-phosphate pocket. E126 is a binding site for NADPH. D150 lines the Mn(2+) pocket. The 1-deoxy-D-xylulose 5-phosphate site is built by S151, E152, S176, and H199. E152 contacts Mn(2+). Residue G205 participates in NADPH binding. 4 residues coordinate 1-deoxy-D-xylulose 5-phosphate: S212, N217, K218, and E221. E221 lines the Mn(2+) pocket.

It belongs to the DXR family. Mg(2+) serves as cofactor. Mn(2+) is required as a cofactor.

The enzyme catalyses 2-C-methyl-D-erythritol 4-phosphate + NADP(+) = 1-deoxy-D-xylulose 5-phosphate + NADPH + H(+). It participates in isoprenoid biosynthesis; isopentenyl diphosphate biosynthesis via DXP pathway; isopentenyl diphosphate from 1-deoxy-D-xylulose 5-phosphate: step 1/6. Catalyzes the NADPH-dependent rearrangement and reduction of 1-deoxy-D-xylulose-5-phosphate (DXP) to 2-C-methyl-D-erythritol 4-phosphate (MEP). This chain is 1-deoxy-D-xylulose 5-phosphate reductoisomerase, found in Microcystis aeruginosa (strain NIES-843 / IAM M-2473).